The sequence spans 582 residues: Formate--tetrahydrofolate ligase (582 aa).

Position 65 to 72 (65 to 72 (TPLGEGKT)) interacts with ATP.

It belongs to the formate--tetrahydrofolate ligase family.

The enzyme catalyses (6S)-5,6,7,8-tetrahydrofolate + formate + ATP = (6R)-10-formyltetrahydrofolate + ADP + phosphate. It functions in the pathway one-carbon metabolism; tetrahydrofolate interconversion. The sequence is that of Formate--tetrahydrofolate ligase from Vibrio campbellii (strain ATCC BAA-1116).